The following is an 86-amino-acid chain: MATKKAGGGSRNGRDSAGRRLGVKKTDGQYVIPGNIIVRQRGTKIHPGTNVGLGKDHTIFALIEGRVEFLTKRNHKIVNVKGIAST.

Positions 1-11 (MATKKAGGGSR) are enriched in gly residues. The tract at residues 1–24 (MATKKAGGGSRNGRDSAGRRLGVK) is disordered.

The protein belongs to the bacterial ribosomal protein bL27 family.

This Rickettsia africae (strain ESF-5) protein is Large ribosomal subunit protein bL27.